The following is a 533-amino-acid chain: DNA-directed RNA polymerase III subunit RPC3 (533 aa).

Ser194 is modified (phosphoserine). Residues 197-230 (GKGKRRRSSDEDATGEPKAKRPKQTTDNKEPIPD) form a disordered region. Residues 211–228 (GEPKAKRPKQTTDNKEPI) show a composition bias toward basic and acidic residues.

The protein belongs to the eukaryotic RPC3/POLR3C RNA polymerase subunit family. Component of the RNA polymerase III complex consisting of 17 subunits: a ten-subunit horseshoe-shaped catalytic core composed of POLR3A/RPC1, POLR3B/RPC2, POLR1C/RPAC1, POLR1D/RPAC2, POLR3K/RPC10, POLR2E/RPABC1, POLR2F/RPABC2, POLR2H/RPABC3, POLR2K/RPABC4 and POLR2L/RPABC5; a mobile stalk composed of two subunits POLR3H/RPC8 and CRCP/RPC9, protruding from the core and functioning primarily in transcription initiation; and additional subunits homologous to general transcription factors of the RNA polymerase II machinery, POLR3C/RPC3-POLR3F/RPC6-POLR3G/RPC7 heterotrimer required for transcription initiation and POLR3D/RPC4-POLR3E/RPC5 heterodimer involved in both transcription initiation and termination. Directly interacts with POLR3G/RPC7 and POLR3GL. Directly interacts with POLR3F/RPC6. Interacts with GTF3C4. As part of the RNA polymerase III complex, interacts with PKP2.

Its subcellular location is the nucleus. Functionally, DNA-dependent RNA polymerase catalyzes the transcription of DNA into RNA using the four ribonucleoside triphosphates as substrates. Specific peripheric component of RNA polymerase III (Pol III) which synthesizes small non-coding RNAs including 5S rRNA, snRNAs, tRNAs and miRNAs from at least 500 distinct genomic loci. Part of POLR3C/RPC3-POLR3F/RPC6-POLR3G/RPC7 heterotrimer, coordinates the dynamics of Pol III stalk and clamp modules during the transition from apo to elongation state. Pol III plays a key role in sensing and limiting infection by intracellular bacteria and DNA viruses. Acts as a nuclear and cytosolic DNA sensor involved in innate immune response. Can sense non-self dsDNA that serves as template for transcription into dsRNA. The non-self RNA polymerase III transcripts, such as Epstein-Barr virus-encoded RNAs (EBERs) induce type I interferon and NF-kappa-B through the RIG-I pathway. Preferentially binds single-stranded DNA (ssDNA) in a sequence-independent manner. The sequence is that of DNA-directed RNA polymerase III subunit RPC3 (POLR3C) from Bos taurus (Bovine).